Here is a 412-residue protein sequence, read N- to C-terminus: G-protein coupled receptor homolog UL33 (412 aa).

The Virion surface portion of the chain corresponds to 1-29 (MDTIIHNSTRNNTPPHINDTCNMTGPLFA). Asn7, Asn18, and Asn22 each carry an N-linked (GlcNAc...) asparagine; by host glycan. Residues 30–54 (IRTTEAVLNTFIIFVGGPLNAIVLI) form a helical membrane-spanning segment. The Intravirion segment spans residues 55–70 (TQLLTNRVLGYSTPTI). A helical membrane pass occupies residues 71 to 95 (YMTNLYSTNFLTLTVLPFIVLSNQW). The Virion surface portion of the chain corresponds to 96 to 102 (LLPAGVA). The helical transmembrane segment at 103-129 (SCKFLSVIYYSSCTVGFATVALIAADR) threads the bilayer. Cys104 and Cys188 are joined by a disulfide. Residues 130–138 (YRVLHKRTY) lie on the Intravirion side of the membrane. The helical transmembrane segment at 139–160 (ARQSYRSTYMILLLTWLAGLIF) threads the bilayer. Topologically, residues 161–203 (SVPAAVYTTVVMHHDANDTNNTNGHATCVLYFVAEEVHTVLLS) are virion surface. Asn177 and Asn180 each carry an N-linked (GlcNAc...) asparagine; by host glycan. The helical transmembrane segment at 204–224 (WKVLLTMVWGAAPVIMMTWFY) threads the bilayer. Over 225 to 240 (AFFYSTVQRTSQKQRS) the chain is Intravirion. Residues 241–267 (RTLTFVSVLLISFVALQTPYVSLMIFN) traverse the membrane as a helical segment. The Virion surface portion of the chain corresponds to 268-281 (SYATTAWPMQCEHL). The helical transmembrane segment at 282-305 (TLRRTIGTLARVVPHLHCLINPIL) threads the bilayer. Topologically, residues 306–412 (YALLGHDFLQ…SQSHHNLSGV (107 aa)) are intravirion. Residues 377–412 (NFPSGTWKGGQKTASNDTSTKIPHRLSQSHHNLSGV) form a disordered region. Polar residues predominate over residues 388 to 397 (KTASNDTSTK).

The protein belongs to the G-protein coupled receptor 1 family. As to quaternary structure, heterodimerizes with US28.

The protein localises to the virion. The protein resides in the host cell membrane. It localises to the host cytoplasm. G-protein-coupled receptor (vGPCR) that constitutively activates multiple oncogenic signaling pathways including STAT3, AP-1, phospholipase C, NF-kappa-B or cAMP-responsive element (CRE) pathways. Plays an important role in viral reactivation from latency through activation of host CREB1, facilitating its recruitment to the viral major immediate early (MIE) genes. In turn, expression of the MIE-driven genes such as UL123 are de-repressed. Also facilitates virus dissemination via the extracellular and cell-to-cell route. The polypeptide is G-protein coupled receptor homolog UL33 (UL33) (Human cytomegalovirus (strain AD169) (HHV-5)).